The chain runs to 221 residues: UPF0328 protein ECU11_2110 (221 aa).

This sequence belongs to the UPF0328 family.

This Encephalitozoon cuniculi (strain GB-M1) (Microsporidian parasite) protein is UPF0328 protein ECU11_2110.